A 245-amino-acid chain; its full sequence is Biosynthetic peptidoglycan transglycosylase (245 aa).

A helical transmembrane segment spans residues 20–42; that stretch reads VYAGSVFAGAWLATQLFYLVQIA.

The protein belongs to the glycosyltransferase 51 family.

Its subcellular location is the cell inner membrane. It carries out the reaction [GlcNAc-(1-&gt;4)-Mur2Ac(oyl-L-Ala-gamma-D-Glu-L-Lys-D-Ala-D-Ala)](n)-di-trans,octa-cis-undecaprenyl diphosphate + beta-D-GlcNAc-(1-&gt;4)-Mur2Ac(oyl-L-Ala-gamma-D-Glu-L-Lys-D-Ala-D-Ala)-di-trans,octa-cis-undecaprenyl diphosphate = [GlcNAc-(1-&gt;4)-Mur2Ac(oyl-L-Ala-gamma-D-Glu-L-Lys-D-Ala-D-Ala)](n+1)-di-trans,octa-cis-undecaprenyl diphosphate + di-trans,octa-cis-undecaprenyl diphosphate + H(+). It participates in cell wall biogenesis; peptidoglycan biosynthesis. In terms of biological role, peptidoglycan polymerase that catalyzes glycan chain elongation from lipid-linked precursors. The chain is Biosynthetic peptidoglycan transglycosylase from Burkholderia ambifaria (strain MC40-6).